We begin with the raw amino-acid sequence, 172 residues long: MAARLWAAAVAPATLNPPLLTLSASSSPSSSRLRRSVLGRLRSRAPRPADFVCRRAKNAAYDDYKFPDPIPEFAAQETSKFKEHMMWRLEQKKDDYFGEHVEEIVDVCTEILGTFLEHDYCGPGTLLVHPFLDMKGEIKERGLPGAPQAARAAIAWAEKNIDKDWKAWTGEY.

The transit peptide at 1 to 54 (MAARLWAAAVAPATLNPPLLTLSASSSPSSSRLRRSVLGRLRSRAPRPADFVCR) directs the protein to the chloroplast.

Its subcellular location is the plastid. The protein localises to the chloroplast stroma. It is found in the chloroplast nucleoid. Functionally, required for the activity of the plastid-encoded RNA polymerase (PEP) and full expression of genes transcribed by PEP. The polypeptide is Protein PLASTID REDOX INSENSITIVE 2, chloroplastic (Oryza sativa subsp. japonica (Rice)).